We begin with the raw amino-acid sequence, 537 residues long: Tyrosine-protein kinase Fyn (537 aa).

G2 carries N-myristoyl glycine lipidation. Residues C3 and C6 are each lipidated (S-palmitoyl cysteine). At T12 the chain carries Phosphothreonine; by PKC. A phosphoserine mark is found at S21 and S26. Residues 82–143 (TGVTLFVALY…PSNYVAPVDS (62 aa)) enclose the SH3 domain. The region spanning 149–246 (WYFGKLGRKD…GLCCRLVVPC (98 aa)) is the SH2 domain. Y185 bears the Phosphotyrosine mark. Residues 271 to 524 (LQLIKRLGNG…YLQGFLEDYF (254 aa)) enclose the Protein kinase domain. ATP contacts are provided by residues 277–285 (LGNGQFGEV) and K299. The Proton acceptor role is filled by D390. Y420 is modified (phosphotyrosine; by autocatalysis). Phosphotyrosine; by CSK is present on Y531.

It belongs to the protein kinase superfamily. Tyr protein kinase family. SRC subfamily. As to quaternary structure, interacts (via its SH3 domain) with PIK3R1 and PRMT8. Interacts with FYB1, PAG1, and SH2D1A. Interacts with CD79A (tyrosine-phosphorylated form); the interaction increases FYN activity. Interacts (via SH2 domain) with CSF1R (tyrosine phosphorylated). Interacts with TOM1L1 (phosphorylated form). Interacts with KDR (tyrosine phosphorylated). Interacts (via SH3 domain) with KLHL2 (via N-terminus). Interacts with SH2D1A and SLAMF1. Interacts with ITCH; the interaction phosphorylates ITCH and negatively regulates its activity. Interacts with FASLG. Interacts with RUNX3. Interacts with KIT. Interacts with EPHA8; possible downstream effector of EPHA8 in regulation of cell adhesion. Interacts with PTK2/FAK1; this interaction leads to PTK2/FAK1 phosphorylation and activation. Interacts with CAV1; this interaction couples integrins to the Ras-ERK pathway. Interacts with UNC119. Interacts (via SH2 domain) with PTPRH (phosphorylated form). Interacts with PTPRO (phosphorylated form). Interacts with PTPRB (phosphorylated form). Interacts with FYB2. Interacts with DSCAM. Interacts with SKAP1 and FYB1; this interaction promotes the phosphorylation of CLNK. Interacts with NEDD9; in the presence of PTK2. It depends on Mn(2+) as a cofactor. Post-translationally, autophosphorylated at Tyr-420. Phosphorylation on the C-terminal tail at Tyr-531 by CSK maintains the enzyme in an inactive state. PTPRC/CD45 dephosphorylates Tyr-531 leading to activation. Ultraviolet B (UVB) strongly increase phosphorylation at Thr-12 and kinase activity, and promotes translocation from the cytoplasm to the nucleus. Dephosphorylation at Tyr-420 by PTPN2 negatively regulates T-cell receptor signaling. Phosphorylated at tyrosine residues, which can be enhanced by NTN1. Palmitoylated. Palmitoylation at Cys-3 and Cys-6, probably by ZDHHC21, regulates subcellular location.

It is found in the cytoplasm. It localises to the nucleus. The protein resides in the cell membrane. The protein localises to the perikaryon. The enzyme catalyses L-tyrosyl-[protein] + ATP = O-phospho-L-tyrosyl-[protein] + ADP + H(+). Its activity is regulated as follows. Inhibited by phosphorylation of Tyr-531 by leukocyte common antigen and activated by dephosphorylation of this site. Its function is as follows. Non-receptor tyrosine-protein kinase that plays a role in many biological processes including regulation of cell growth and survival, cell adhesion, integrin-mediated signaling, cytoskeletal remodeling, cell motility, immune response and axon guidance. Inactive FYN is phosphorylated on its C-terminal tail within the catalytic domain. Following activation by PKA, the protein subsequently associates with PTK2/FAK1, allowing PTK2/FAK1 phosphorylation, activation and targeting to focal adhesions. Involved in the regulation of cell adhesion and motility through phosphorylation of CTNNB1 (beta-catenin) and CTNND1 (delta-catenin). Regulates cytoskeletal remodeling by phosphorylating several proteins including the actin regulator WAS and the microtubule-associated proteins MAP2 and MAPT. Promotes cell survival by phosphorylating AGAP2/PIKE-A and preventing its apoptotic cleavage. Participates in signal transduction pathways that regulate the integrity of the glomerular slit diaphragm (an essential part of the glomerular filter of the kidney) by phosphorylating several slit diaphragm components including NPHS1, KIRREL1 and TRPC6. Plays a role in neural processes by phosphorylating DPYSL2, a multifunctional adapter protein within the central nervous system, ARHGAP32, a regulator for Rho family GTPases implicated in various neural functions, and SNCA, a small pre-synaptic protein. Involved in reelin signaling by mediating phosphorylation of DAB1 following reelin (RELN)-binding to its receptor. Participates in the downstream signaling pathways that lead to T-cell differentiation and proliferation following T-cell receptor (TCR) stimulation. Phosphorylates PTK2B/PYK2 in response to T-cell receptor activation. Also participates in negative feedback regulation of TCR signaling through phosphorylation of PAG1, thereby promoting interaction between PAG1 and CSK and recruitment of CSK to lipid rafts. CSK maintains LCK and FYN in an inactive form. Promotes CD28-induced phosphorylation of VAV1. In mast cells, phosphorylates CLNK after activation of immunoglobulin epsilon receptor signaling. Can also promote CD244-mediated NK cell activation. The protein is Tyrosine-protein kinase Fyn of Sus scrofa (Pig).